Consider the following 1299-residue polypeptide: DNA-directed RNA polymerase subunit beta' (1299 aa).

Residues Cys-60, Cys-62, Cys-75, and Cys-78 each coordinate Zn(2+). Mg(2+) is bound by residues Asp-535, Asp-537, and Asp-539. Cys-877, Cys-954, Cys-961, and Cys-964 together coordinate Zn(2+).

The protein belongs to the RNA polymerase beta' chain family. As to quaternary structure, the RNAP catalytic core consists of 2 alpha, 1 beta, 1 beta' and 1 omega subunit. When a sigma factor is associated with the core the holoenzyme is formed, which can initiate transcription. It depends on Mg(2+) as a cofactor. The cofactor is Zn(2+).

The catalysed reaction is RNA(n) + a ribonucleoside 5'-triphosphate = RNA(n+1) + diphosphate. In terms of biological role, DNA-dependent RNA polymerase catalyzes the transcription of DNA into RNA using the four ribonucleoside triphosphates as substrates. This chain is DNA-directed RNA polymerase subunit beta', found in Renibacterium salmoninarum (strain ATCC 33209 / DSM 20767 / JCM 11484 / NBRC 15589 / NCIMB 2235).